The primary structure comprises 419 residues: [Butirosin acyl-carrier protein]--L-glutamate ligase (419 aa).

Residues 144–345 (RRLMERNGFN…FVESRVLVFN (202 aa)) enclose the ATP-grasp domain. 174 to 231 (ISAGFSKCVLKVPYGSSGKGLKVIDNERNFRFLLNYIQNRQTNVDLLLEGWHPHRLSL) is an ATP binding site. Mg(2+)-binding residues include Asp-298, Glu-312, and Asn-314. Residues Asp-298, Glu-312, and Asn-314 each contribute to the Mn(2+) site.

In terms of assembly, monomer. Mg(2+) serves as cofactor. It depends on Mn(2+) as a cofactor.

The enzyme catalyses holo-[BtrI ACP] + L-glutamate + ATP = gamma-L-glutamyl-[BtrI ACP] + ADP + phosphate. It catalyses the reaction 4-aminobutanoyl-[BtrI ACP] + L-glutamate + ATP = 4-(gamma-L-glutamylamino)butanoyl-[BtrI ACP] + ADP + phosphate + H(+). It participates in antibiotic biosynthesis; butirosin biosynthesis. ATP-dependent ligase that catalyzes 2 steps in the biosynthesis of the side chain of the aminoglycoside antibiotics in the biosynthetic pathway of butirosin. Mediates the addition of one molecule of L-glutamate to a dedicated acyl-carrier protein. Following decarboxylation of the product by BtrK, adds a second L-glutamate molecule. The sequence is that of [Butirosin acyl-carrier protein]--L-glutamate ligase (btrJ) from Niallia circulans (Bacillus circulans).